We begin with the raw amino-acid sequence, 51 residues long: Sperm protamine P1 (51 aa).

Cystine bridges form between cysteine 7–cysteine 15 and cysteine 40–cysteine 48.

Belongs to the protamine P1 family. In terms of assembly, cross-linked by interchain disulfide bonds around the DNA-helix. In terms of tissue distribution, testis.

Its subcellular location is the nucleus. The protein localises to the chromosome. Protamines substitute for histones in the chromatin of sperm during the haploid phase of spermatogenesis. They compact sperm DNA into a highly condensed, stable and inactive complex. This is Sperm protamine P1 (PRM1) from Capra hircus (Goat).